The chain runs to 472 residues: 3-isopropylmalate dehydratase large subunit (472 aa).

Cys347, Cys407, and Cys410 together coordinate [4Fe-4S] cluster.

The protein belongs to the aconitase/IPM isomerase family. LeuC type 1 subfamily. In terms of assembly, heterodimer of LeuC and LeuD. [4Fe-4S] cluster is required as a cofactor.

It catalyses the reaction (2R,3S)-3-isopropylmalate = (2S)-2-isopropylmalate. It participates in amino-acid biosynthesis; L-leucine biosynthesis; L-leucine from 3-methyl-2-oxobutanoate: step 2/4. Its function is as follows. Catalyzes the isomerization between 2-isopropylmalate and 3-isopropylmalate, via the formation of 2-isopropylmaleate. This Bacillus subtilis (strain 168) protein is 3-isopropylmalate dehydratase large subunit.